The chain runs to 921 residues: GPI ethanolamine phosphate transferase 1 (921 aa).

A helical membrane pass occupies residues 37-57; that stretch reads PGHVALIAGLYEDVSAVTTGW. 2 N-linked (GlcNAc...) asparagine glycosylation sites follow: asparagine 69 and asparagine 132. Transmembrane regions (helical) follow at residues 386 to 406, 418 to 438, 441 to 461, 483 to 503, 509 to 529, 533 to 553, 561 to 581, 606 to 626, 640 to 660, and 679 to 699; these read ALIT…VIDL, TLIG…SFAI, SPLT…EVYA, FVSL…LALG, ILTI…FSFL, MALS…TLLP, VNMI…YLIL, LVGI…SSAL, VMGW…RAKP, and FVIL…AVLV. The segment at 715–737 is disordered; the sequence is SANGAARSAPSPAKPHNLETSQT. Transmembrane regions (helical) follow at residues 752–772, 795–815, 825–845, and 862–882; these read VALF…NVAS, AMLI…LGIL, ALFM…FWVV, and VIAS…AMFI.

The protein belongs to the PIGG/PIGN/PIGO family. PIGN subfamily.

It is found in the endoplasmic reticulum membrane. It functions in the pathway glycolipid biosynthesis; glycosylphosphatidylinositol-anchor biosynthesis. Its function is as follows. Ethanolamine phosphate transferase involved in glycosylphosphatidylinositol-anchor biosynthesis. Transfers ethanolamine phosphate to the first alpha-1,4-linked mannose of the glycosylphosphatidylinositol precursor of GPI-anchor. The sequence is that of GPI ethanolamine phosphate transferase 1 (MCD4) from Chaetomium globosum (strain ATCC 6205 / CBS 148.51 / DSM 1962 / NBRC 6347 / NRRL 1970) (Soil fungus).